A 337-amino-acid chain; its full sequence is D-alanine--D-alanine ligase (337 aa).

Residues K124 to N330 enclose the ATP-grasp domain. A154 to E209 lines the ATP pocket. Mg(2+)-binding residues include D284, E297, and N299.

It belongs to the D-alanine--D-alanine ligase family. Requires Mg(2+) as cofactor. It depends on Mn(2+) as a cofactor.

It localises to the cytoplasm. It carries out the reaction 2 D-alanine + ATP = D-alanyl-D-alanine + ADP + phosphate + H(+). It functions in the pathway cell wall biogenesis; peptidoglycan biosynthesis. Its function is as follows. Cell wall formation. The polypeptide is D-alanine--D-alanine ligase (Shewanella sp. (strain W3-18-1)).